The following is a 753-amino-acid chain: Photosystem I P700 chlorophyll a apoprotein A1 (753 aa).

A run of 8 helical transmembrane segments spans residues Ile-73 to Ala-96, Leu-159 to His-182, Met-198 to Leu-222, Ile-294 to Tyr-312, Trp-349 to Tyr-372, Leu-388 to Val-414, Thr-436 to His-458, and Phe-534 to Ile-552. [4Fe-4S] cluster-binding residues include Cys-576 and Cys-585. A run of 2 helical transmembrane segments spans residues His-592–Trp-613 and Leu-667–Phe-689. His-678 is a chlorophyll a' binding site. The chlorophyll a site is built by Met-686 and Tyr-694. Trp-695 is a binding site for phylloquinone. The chain crosses the membrane as a helical span at residues Ala-727–Ala-747.

This sequence belongs to the PsaA/PsaB family. In terms of assembly, the PsaA/B heterodimer binds the P700 chlorophyll special pair and subsequent electron acceptors. PSI consists of a core antenna complex that captures photons, and an electron transfer chain that converts photonic excitation into a charge separation. The cyanobacterial PSI reaction center is composed of one copy each of PsaA,B,C,D,E,F,I,J,K,L,M and X, and forms trimeric complexes. PSI electron transfer chain: 5 chlorophyll a, 1 chlorophyll a', 2 phylloquinones and 3 4Fe-4S clusters. PSI core antenna: 90 chlorophyll a, 22 carotenoids, 3 phospholipids and 1 galactolipid. P700 is a chlorophyll a/chlorophyll a' dimer, A0 is one or more chlorophyll a, A1 is one or both phylloquinones and FX is a shared 4Fe-4S iron-sulfur center. serves as cofactor.

The protein resides in the cellular thylakoid membrane. It catalyses the reaction reduced [plastocyanin] + hnu + oxidized [2Fe-2S]-[ferredoxin] = oxidized [plastocyanin] + reduced [2Fe-2S]-[ferredoxin]. PsaA and PsaB bind P700, the primary electron donor of photosystem I (PSI), as well as the electron acceptors A0, A1 and FX. PSI is a plastocyanin/cytochrome c6-ferredoxin oxidoreductase, converting photonic excitation into a charge separation, which transfers an electron from the donor P700 chlorophyll pair to the spectroscopically characterized acceptors A0, A1, FX, FA and FB in turn. Oxidized P700 is reduced on the lumenal side of the thylakoid membrane by plastocyanin or cytochrome c6. This chain is Photosystem I P700 chlorophyll a apoprotein A1, found in Acaryochloris marina (strain MBIC 11017).